The sequence spans 249 residues: 4-hydroxy-tetrahydrodipicolinate reductase (249 aa).

NAD(+)-binding positions include 8-13 (GVTGQM), 87-89 (GTT), and 111-114 (ATNF). Catalysis depends on H143, which acts as the Proton donor/acceptor. Residue H144 participates in (S)-2,3,4,5-tetrahydrodipicolinate binding. Residue K147 is the Proton donor of the active site. Position 153–154 (153–154 (GT)) interacts with (S)-2,3,4,5-tetrahydrodipicolinate.

This sequence belongs to the DapB family.

It is found in the cytoplasm. The enzyme catalyses (S)-2,3,4,5-tetrahydrodipicolinate + NAD(+) + H2O = (2S,4S)-4-hydroxy-2,3,4,5-tetrahydrodipicolinate + NADH + H(+). It catalyses the reaction (S)-2,3,4,5-tetrahydrodipicolinate + NADP(+) + H2O = (2S,4S)-4-hydroxy-2,3,4,5-tetrahydrodipicolinate + NADPH + H(+). It functions in the pathway amino-acid biosynthesis; L-lysine biosynthesis via DAP pathway; (S)-tetrahydrodipicolinate from L-aspartate: step 4/4. Its function is as follows. Catalyzes the conversion of 4-hydroxy-tetrahydrodipicolinate (HTPA) to tetrahydrodipicolinate. The polypeptide is 4-hydroxy-tetrahydrodipicolinate reductase (Haloarcula marismortui (strain ATCC 43049 / DSM 3752 / JCM 8966 / VKM B-1809) (Halobacterium marismortui)).